A 21-amino-acid chain; its full sequence is Putative sperm adenylate cyclase (21 aa).

It carries out the reaction ATP = 3',5'-cyclic AMP + diphosphate. This chain is Putative sperm adenylate cyclase, found in Mus musculus (Mouse).